A 315-amino-acid chain; its full sequence is Putative glycosyltransferase ORF315 (315 aa).

Belongs to the glycosyltransferase group 1 family. Glycosyltransferase 4 subfamily.

The protein is Putative glycosyltransferase ORF315 of Acidianus convivator (ABV).